The following is a 74-amino-acid chain: Large ribosomal subunit protein uL30 (74 aa).

The protein belongs to the universal ribosomal protein uL30 family. As to quaternary structure, part of the 50S ribosomal subunit.

This chain is Large ribosomal subunit protein uL30, found in Koribacter versatilis (strain Ellin345).